Reading from the N-terminus, the 301-residue chain is Protease HtpX homolog (301 aa).

The next 2 membrane-spanning stretches (helical) occupy residues 11-31 and 34-54; these read VLLL…IAGA and NSAF…YSYW. Residue His-138 coordinates Zn(2+). The active site involves Glu-139. Residue His-142 participates in Zn(2+) binding. 2 helical membrane-spanning segments follow: residues 154–174 and 188–208; these read AAAV…AAIF and LVGL…QLAI. Zn(2+) is bound at residue Glu-213.

It belongs to the peptidase M48B family. Zn(2+) is required as a cofactor.

The protein localises to the cell membrane. The sequence is that of Protease HtpX homolog from Kocuria rhizophila (strain ATCC 9341 / DSM 348 / NBRC 103217 / DC2201).